Here is a 130-residue protein sequence, read N- to C-terminus: MGLIVYYSSATGNTEHFVSQLGQRFFKIDKKISSALVYEPYVLVVPTYADGEGRKAVPKPVIHFLNEVENRKLMRGVIGGGNRNFGRNYSLASKIIAEKCSVPCLYNFELRGTDEDVICVKKGLEKFWKQ.

It belongs to the NrdI family.

In terms of biological role, probably involved in ribonucleotide reductase function. The chain is Protein NrdI from Bartonella bacilliformis (strain ATCC 35685 / KC583 / Herrer 020/F12,63).